Consider the following 77-residue polypeptide: Apidermin 2 (77 aa).

Residues 1-16 form the signal peptide; the sequence is MKSLLILFAIVAVVAA.

As to expression, expressed in the epidermis, hypopharyngeal glands, fat body, trachea, esophagus and stomach.

The protein localises to the secreted. In terms of biological role, antimicrobial peptide that binds cell wall carbohydrates of microbial symbionts and induces structural damage. Binds the cell wall carbohydrates mannan, N-acetyl-D-glucosamine and lipopolysaccharide. Can target fungi, Gram-negative and Gram-positive bacteria. The chain is Apidermin 2 from Apis mellifera (Honeybee).